The chain runs to 372 residues: Chloroplast protein FOR GROWTH AND FERTILITY 2 (372 aa).

Residues methionine 1–serine 20 are disordered. The N-terminal 78 residues, methionine 1–serine 78, are a transit peptide targeting the chloroplast. A compositionally biased stretch (polar residues) spans proline 7–serine 20. Helical transmembrane passes span valine 109–phenylalanine 129, phenylalanine 161–leucine 181, alanine 195–leucine 215, valine 231–proline 251, glycine 281–proline 301, phenylalanine 309–glycine 329, and leucine 352–tyrosine 372.

In terms of tissue distribution, mostly expressed in leaves, stems and flowers, to a lower extent, in roots, floral bud, inflorescence and siliques, and, barely, in seedlings.

It is found in the plastid. It localises to the chloroplast membrane. The protein localises to the plastid membrane. In terms of biological role, together with CGF1, essential protein which supports female gametogenesis and embryogenesis, probably by securing local energy supply. This chain is Chloroplast protein FOR GROWTH AND FERTILITY 2, found in Arabidopsis thaliana (Mouse-ear cress).